We begin with the raw amino-acid sequence, 383 residues long: Trichodiene synthase (383 aa).

The protein belongs to the trichodiene synthase family.

It catalyses the reaction (2E,6E)-farnesyl diphosphate = trichodiene + diphosphate. The protein operates within sesquiterpene biosynthesis; trichothecene biosynthesis. Functionally, TS is a member of the terpene cyclase group of enzymes. It catalyzes the isomerization and cyclization of farnesyl pyro-phosphate to form trichodiene, the first cyclic intermediate in the biosynthetic pathway for trichothecenes. It serves to branch trichothecene biosynthesis from the isoprenoid pathway. This chain is Trichodiene synthase (TRI5), found in Stachybotrys chartarum (Toxic black mold).